Here is a 243-residue protein sequence, read N- to C-terminus: Uridylate kinase (243 aa).

Residue 12 to 15 (KLSG) participates in ATP binding. Gly54 lines the UMP pocket. 2 residues coordinate ATP: Gly55 and Arg59. A UMP-binding site is contributed by 135–142 (TGNPYFTT). ATP contacts are provided by Asn163, Tyr169, and Asp172.

It belongs to the UMP kinase family. As to quaternary structure, homohexamer.

It is found in the cytoplasm. The catalysed reaction is UMP + ATP = UDP + ADP. It functions in the pathway pyrimidine metabolism; CTP biosynthesis via de novo pathway; UDP from UMP (UMPK route): step 1/1. With respect to regulation, inhibited by UTP. In terms of biological role, catalyzes the reversible phosphorylation of UMP to UDP. The chain is Uridylate kinase from Roseiflexus sp. (strain RS-1).